A 139-amino-acid polypeptide reads, in one-letter code: Acid shock protein (139 aa).

Residues 1 to 21 (MKKVLALVVAAAMGLSSAAFA) form the signal peptide. Residues 22–80 (ADAVSTTQAPAATHSTAAKTTHHKKHHKAAAKPAAEQKAQAAKKHKKAEAKPAAAQKAQ) constitute a propeptide that is removed on maturation. Low complexity predominate over residues 27-40 (TTQAPAATHSTAAK). Positions 27-139 (TTQAPAATHS…AAKPTAQPAA (113 aa)) are disordered. A compositionally biased stretch (basic residues) spans 41-51 (TTHHKKHHKAA). Composition is skewed to low complexity over residues 52–61 (AKPAAEQKAQ) and 90–99 (AKPAAPQKAQ). Basic residues predominate over residues 118 to 130 (AAKKHHKTTKHQA).

The protein belongs to the Asr family. In terms of processing, proteolytic processing gives rise to the active protein.

Its subcellular location is the periplasm. Required for growth and/or survival at acidic conditions. This is Acid shock protein (asr) from Klebsiella pneumoniae.